Reading from the N-terminus, the 259-residue chain is Tryptophan synthase alpha chain (259 aa).

Residues E35 and D46 each act as proton acceptor in the active site.

The protein belongs to the TrpA family. Tetramer of two alpha and two beta chains.

The enzyme catalyses (1S,2R)-1-C-(indol-3-yl)glycerol 3-phosphate + L-serine = D-glyceraldehyde 3-phosphate + L-tryptophan + H2O. It functions in the pathway amino-acid biosynthesis; L-tryptophan biosynthesis; L-tryptophan from chorismate: step 5/5. The alpha subunit is responsible for the aldol cleavage of indoleglycerol phosphate to indole and glyceraldehyde 3-phosphate. This Methanococcus maripaludis (strain C7 / ATCC BAA-1331) protein is Tryptophan synthase alpha chain.